The primary structure comprises 436 residues: F-box protein SKIP16 (436 aa).

Residues 75–111 (RESFRMYPWNLVKRVRLCWDNLKQWLTLNFPEAKATL) enclose the F-box; degenerate domain. Positions 295–436 (VSVTNGVQVR…FPLELPDYIF (142 aa)) constitute an ApaG domain.

In terms of assembly, part of a SCF (ASK-cullin-F-box) protein ligase complex. Interacts with SKP1A/ASK1, SKP1B/ASK2, ASK4, ASK11 and ASK13.

It functions in the pathway protein modification; protein ubiquitination. Its function is as follows. Component of SCF(ASK-cullin-F-box) E3 ubiquitin ligase complexes, which may mediate the ubiquitination and subsequent proteasomal degradation of target proteins. The sequence is that of F-box protein SKIP16 (SKIP16) from Arabidopsis thaliana (Mouse-ear cress).